The following is a 430-amino-acid chain: Type 3 secretion system ATPase (430 aa).

ATP is bound at residue 162-167; that stretch reads GCGKTF.

It belongs to the ATPase alpha/beta chains family. T3SS ATPase subfamily. As to quaternary structure, the core secretion machinery of the T3SS is composed of approximately 20 different proteins, including cytoplasmic components, a base, an export apparatus and a needle. This subunit is part of the cytosolic complex. Forms homohexamers. Interacts directly with MxiN/SctL (stator protein) and Spa13/SctO (stalk protein). Can form a soluble complex with Spa33/SctQ, MxiN/SctL and MxiK/SctK.

The protein resides in the cytoplasm. The catalysed reaction is ATP + H2O + cellular proteinSide 1 = ADP + phosphate + cellular proteinSide 2.. With respect to regulation, oligomerization increases ATPase activity. Monomeric forms exhibit low-level ATPase activity by forming short-lived oligomers with active site contributions from at least two protomers. In contrast, oligomers exhibit enhanced ATP hydrolysis rates that likely result from multiple preformed active sites within the oligomeric complex. Oligomerization is important for both enzyme activation and T3SS function. Activity is regulated by MxiN/SctL, which differentially regulates the activity of the monomer and the oligomer: it up-regulates the ATPase activity of the monomer, while it down-regulates the activity of the oligomer. In terms of biological role, ATPase component of the type III secretion system (T3SS), also called injectisome, which is used to inject bacterial effector proteins into eukaryotic host cells. Acts as a molecular motor to provide the energy that is required for the export of proteins. Required for type III secretion apparatus (T3SA) formation, proper protein secretion, host cell invasion and virulence. May play a critical role in T3SS substrate recognition, disassembly of the effector/chaperone complex and unfolding of the effector in an ATP-dependent manner prior to secretion. In Shigella flexneri, this protein is Type 3 secretion system ATPase.